We begin with the raw amino-acid sequence, 93 residues long: Small ribosomal subunit protein uS19 (93 aa).

Belongs to the universal ribosomal protein uS19 family.

In terms of biological role, protein S19 forms a complex with S13 that binds strongly to the 16S ribosomal RNA. This chain is Small ribosomal subunit protein uS19, found in Ligilactobacillus salivarius (strain UCC118) (Lactobacillus salivarius).